Consider the following 463-residue polypeptide: ATP-dependent protease ATPase subunit HslU (463 aa).

Residues Ile-19, 61-66 (GVGKTE), Asp-277, Glu-341, and Arg-413 contribute to the ATP site.

Belongs to the ClpX chaperone family. HslU subfamily. In terms of assembly, a double ring-shaped homohexamer of HslV is capped on each side by a ring-shaped HslU homohexamer. The assembly of the HslU/HslV complex is dependent on binding of ATP.

The protein resides in the cytoplasm. ATPase subunit of a proteasome-like degradation complex; this subunit has chaperone activity. The binding of ATP and its subsequent hydrolysis by HslU are essential for unfolding of protein substrates subsequently hydrolyzed by HslV. HslU recognizes the N-terminal part of its protein substrates and unfolds these before they are guided to HslV for hydrolysis. The chain is ATP-dependent protease ATPase subunit HslU from Bacillus cytotoxicus (strain DSM 22905 / CIP 110041 / 391-98 / NVH 391-98).